The following is a 151-amino-acid chain: Probable transcriptional regulator syrB2 (151 aa).

Residues 1–61 (MADESNTGSI…PRRYSEQQRK (61 aa)) are disordered. The segment covering 11 to 23 (AAAVAPNADVKAP) has biased composition (low complexity). Positions 24 to 35 (AAKKKRSPRRQK) are enriched in basic residues.

It belongs to the SyrB family.

In terms of biological role, seems to affect the transcription of cya3. May be negatively autoregulated. In Rhizobium meliloti (strain 1021) (Ensifer meliloti), this protein is Probable transcriptional regulator syrB2 (syrB2).